We begin with the raw amino-acid sequence, 224 residues long: uncharacterized protein (224 aa).

A run of 4 helical transmembrane segments spans residues 25–45 (ALAW…IYGI), 56–76 (VFLI…VILP), 107–127 (ELFL…YFFV), and 149–169 (IFVK…VVYF).

The protein localises to the cell membrane. This is an uncharacterized protein from Mycoplasma pneumoniae (strain ATCC 29342 / M129 / Subtype 1) (Mycoplasmoides pneumoniae).